The primary structure comprises 498 residues: GTPase Der (498 aa).

EngA-type G domains follow at residues 3 to 167 and 210 to 383; these read PVVA…FDDL and IKLA…KSAT. GTP contacts are provided by residues 9–16, 57–61, 119–122, 216–223, 263–267, and 328–331; these read GRPNVGKS, DTGGI, NKID, DTAGV, and NKWD. A KH-like domain is found at 384-468; sequence TRVGTSVLTR…PIRINFQNSD (85 aa).

Belongs to the TRAFAC class TrmE-Era-EngA-EngB-Septin-like GTPase superfamily. EngA (Der) GTPase family. In terms of assembly, associates with the 50S ribosomal subunit.

GTPase that plays an essential role in the late steps of ribosome biogenesis. The chain is GTPase Der from Vibrio campbellii (strain ATCC BAA-1116).